The following is a 441-amino-acid chain: Deoxyguanosinetriphosphate triphosphohydrolase-like protein (441 aa).

An HD domain is found at 59 to 250; sequence RLTHSLEVSQ…MELADDTAYA (192 aa).

Belongs to the dGTPase family. Type 2 subfamily.

The protein is Deoxyguanosinetriphosphate triphosphohydrolase-like protein of Shewanella loihica (strain ATCC BAA-1088 / PV-4).